A 205-amino-acid chain; its full sequence is SCO2-like protein RP587 (205 aa).

The Cu cation site is built by Cys-82, Cys-86, and His-172.

The protein belongs to the SCO1/2 family.

The polypeptide is SCO2-like protein RP587 (Rickettsia prowazekii (strain Madrid E)).